The primary structure comprises 95 residues: Protein IDA-LIKE 2 (95 aa).

Positions 1 to 35 are cleaved as a signal peptide; that stretch reads MSSRNQRSRITSSFFVSFFTRTILLLLILLLGFCN. The interval 75–95 is disordered; that stretch reads ASGPSRKHNDIGLLSWHRSSP.

In terms of tissue distribution, expressed in leaves, buds, flowers, seedlings and seeds. Detected at the base of pedicel, in the floral and funicule abscission zones and in vascular tissues.

The protein localises to the secreted. Its subcellular location is the extracellular space. In terms of biological role, may be involved in floral abscission. In Arabidopsis thaliana (Mouse-ear cress), this protein is Protein IDA-LIKE 2 (IDL2).